A 302-amino-acid polypeptide reads, in one-letter code: Urease accessory protein UreD 2 (302 aa).

Belongs to the UreD family. UreD, UreF and UreG form a complex that acts as a GTP-hydrolysis-dependent molecular chaperone, activating the urease apoprotein by helping to assemble the nickel containing metallocenter of UreC. The UreE protein probably delivers the nickel.

The protein localises to the cytoplasm. Functionally, required for maturation of urease via the functional incorporation of the urease nickel metallocenter. This is Urease accessory protein UreD 2 from Brucella ovis (strain ATCC 25840 / 63/290 / NCTC 10512).